We begin with the raw amino-acid sequence, 305 residues long: Acetyl-coenzyme A carboxylase carboxyl transferase subunit beta (305 aa).

The CoA carboxyltransferase N-terminal domain occupies L25–L293. Positions 29, 32, 48, and 51 each coordinate Zn(2+). A C4-type zinc finger spans residues C29–C51.

This sequence belongs to the AccD/PCCB family. Acetyl-CoA carboxylase is a heterohexamer composed of biotin carboxyl carrier protein (AccB), biotin carboxylase (AccC) and two subunits each of ACCase subunit alpha (AccA) and ACCase subunit beta (AccD). Requires Zn(2+) as cofactor.

It localises to the cytoplasm. The catalysed reaction is N(6)-carboxybiotinyl-L-lysyl-[protein] + acetyl-CoA = N(6)-biotinyl-L-lysyl-[protein] + malonyl-CoA. The protein operates within lipid metabolism; malonyl-CoA biosynthesis; malonyl-CoA from acetyl-CoA: step 1/1. Its function is as follows. Component of the acetyl coenzyme A carboxylase (ACC) complex. Biotin carboxylase (BC) catalyzes the carboxylation of biotin on its carrier protein (BCCP) and then the CO(2) group is transferred by the transcarboxylase to acetyl-CoA to form malonyl-CoA. In Granulibacter bethesdensis (strain ATCC BAA-1260 / CGDNIH1), this protein is Acetyl-coenzyme A carboxylase carboxyl transferase subunit beta.